A 476-amino-acid chain; its full sequence is Vitamin D-binding protein (476 aa).

An N-terminal signal peptide occupies residues 1–16 (MKRVLVLLLALAFGHA). Albumin domains follow at residues 17–208 (LERG…QMKH), 209–394 (LSLL…LLKR), and 395–476 (QLTS…TLQS). Cystine bridges form between Cys-29-Cys-75, Cys-74-Cys-83, Cys-96-Cys-112, Cys-111-Cys-122, Cys-145-Cys-190, Cys-189-Cys-198, Cys-220-Cys-266, Cys-265-Cys-273, Cys-286-Cys-300, Cys-299-Cys-311, Cys-335-Cys-376, Cys-375-Cys-384, Cys-407-Cys-453, and Cys-452-Cys-462. N-linked (GlcNAc...) asparagine glycosylation is present at Asn-288. Ser-434 is subject to Phosphoserine.

It belongs to the ALB/AFP/VDB family. Associates with membrane-bound immunoglobulin on the surface of B-lymphocytes and with IgG Fc receptor on the membranes of T-lymphocytes. Interacts with LRP2; the interaction is required for renal uptake of GC in complex with 25-hydroxyvitamin D3.

It localises to the secreted. In terms of biological role, involved in vitamin D transport and storage, scavenging of extracellular G-actin, enhancement of the chemotactic activity of C5 alpha for neutrophils in inflammation and macrophage activation. The polypeptide is Vitamin D-binding protein (Gc) (Mus musculus (Mouse)).